The sequence spans 199 residues: uncharacterized protein (199 aa).

4 consecutive transmembrane segments (helical) span residues 35–55 (CELAFSILILFCAFAELIFYD), 57–77 (FVIFFLMIIASFVFVLLYLEF), 94–114 (LSAAFMSMVCWLSVLIPIFFG), and 131–151 (YYGCQVIFGSLLTTFAAASFA).

It localises to the membrane. This is an uncharacterized protein from Caenorhabditis elegans.